The chain runs to 1072 residues: DNA-directed RNA polymerase subunit beta (1072 aa).

This sequence belongs to the RNA polymerase beta chain family. In plastids the minimal PEP RNA polymerase catalytic core is composed of four subunits: alpha, beta, beta', and beta''. When a (nuclear-encoded) sigma factor is associated with the core the holoenzyme is formed, which can initiate transcription.

It localises to the plastid. The protein resides in the chloroplast. The enzyme catalyses RNA(n) + a ribonucleoside 5'-triphosphate = RNA(n+1) + diphosphate. In terms of biological role, DNA-dependent RNA polymerase catalyzes the transcription of DNA into RNA using the four ribonucleoside triphosphates as substrates. This chain is DNA-directed RNA polymerase subunit beta, found in Lobularia maritima (Sweet alyssum).